Reading from the N-terminus, the 354-residue chain is MAGCCLSAEEKESQRINAEIEKQLRRDKRDARRELKLLLLGTGESGKSTFIKQMRIIHGSGYTDEDRKGFTKLVYQNIFTSMQSMIRAMDTLRIQYTSEQNMENALVIREVEVDKVSSLERKHVEAIKKLWEDEGIQECYDRRREYQLSDSTKYYLSDIDRISNPGFIPTQQDVLRVRVPTTGIIEYPFDLENIIFRMVDVGGQRSERRKWIHCFENVTSIIFLVALSEYDQVLAECDNENRMEESKALFKTIITYPWFQNSSVILFLNKKDLLQEKIMYSHLIDYFPEFTGPKQDSQAARDFILKLYQDQNPDKEKVIYSHFTCATDTENIRFVFAAVKDTILQLNLREFNLV.

The 322-residue stretch at 33–354 (RELKLLLLGT…QLNLREFNLV (322 aa)) folds into the G-alpha domain. The segment at 36 to 49 (KLLLLGTGESGKST) is G1 motif. GTP-binding positions include 41-48 (GTGESGKS), 175-181 (LRVRVPT), 200-204 (DVGGQ), 269-272 (NKKD), and A326. Mg(2+) is bound by residues S48 and T181. Residues 173–181 (DVLRVRVPT) form a G2 motif region. A G3 motif region spans residues 196 to 205 (FRMVDVGGQR). Residues 265 to 272 (ILFLNKKD) are G4 motif. The tract at residues 324–329 (TCATDT) is G5 motif.

Belongs to the G-alpha family. G(q) subfamily. G proteins are composed of 3 units; alpha, beta and gamma. The alpha chain contains the guanine nucleotide binding site.

In terms of biological role, guanine nucleotide-binding proteins (G proteins) are involved as modulators or transducers in various transmembrane signaling systems. Acts as an activator of phospholipase C. Mediates responses to trypsin. This chain is Guanine nucleotide-binding protein subunit alpha-14 (gna14), found in Xenopus laevis (African clawed frog).